The following is a 320-amino-acid chain: ATP-dependent 6-phosphofructokinase (320 aa).

ATP is bound at residue Gly12. Arg22–Arg26 is a binding site for ADP. ATP contacts are provided by residues Arg73–Phe74 and Gly103–Ser106. Asp104 is a binding site for Mg(2+). Thr126–Asp128 contributes to the substrate binding site. Asp128 (proton acceptor) is an active-site residue. Arg155 lines the ADP pocket. Substrate is bound by residues Arg163 and Met170–Arg172. Residues Gly186–Glu188, Lys212, and Lys214–His216 contribute to the ADP site. Residues Glu223, Arg244, and His250 to Arg253 contribute to the substrate site.

It belongs to the phosphofructokinase type A (PFKA) family. ATP-dependent PFK group I subfamily. Prokaryotic clade 'B1' sub-subfamily. In terms of assembly, homotetramer. Mg(2+) is required as a cofactor.

The protein localises to the cytoplasm. The enzyme catalyses beta-D-fructose 6-phosphate + ATP = beta-D-fructose 1,6-bisphosphate + ADP + H(+). Its pathway is carbohydrate degradation; glycolysis; D-glyceraldehyde 3-phosphate and glycerone phosphate from D-glucose: step 3/4. Allosterically activated by ADP and other diphosphonucleosides, and allosterically inhibited by phosphoenolpyruvate. In terms of biological role, catalyzes the phosphorylation of D-fructose 6-phosphate to fructose 1,6-bisphosphate by ATP, the first committing step of glycolysis. The chain is ATP-dependent 6-phosphofructokinase from Aliivibrio salmonicida (strain LFI1238) (Vibrio salmonicida (strain LFI1238)).